We begin with the raw amino-acid sequence, 458 residues long: UDP-glycosyltransferase 76G1 (458 aa).

H25 functions as the Proton acceptor in the catalytic mechanism. Residue H25 coordinates rebaudioside A. Position 25 (H25) interacts with rubusoside. Residue N27 participates in UDP binding. D124 serves as the catalytic Charge relay. Rebaudioside A is bound by residues 146–147 (TS) and H155. UDP-binding positions include S283, 338–339 (WV), and 356–364 (HSGWNSTLE). Residues W359 and 380-381 (DQ) contribute to the rebaudioside A site.

This sequence belongs to the UDP-glycosyltransferase family. Monomer.

It catalyses the reaction steviolbioside + UDP-alpha-D-glucose = rebaudioside B + UDP + H(+). It carries out the reaction stevioside + UDP-alpha-D-glucose = rebaudioside A + UDP + H(+). The catalysed reaction is rebaudioside E + UDP-alpha-D-glucose = rebaudioside D + UDP + H(+). The enzyme catalyses rebaudioside D + UDP-alpha-D-glucose = rebaudioside M + UDP + H(+). Its function is as follows. Involved in the biosynthesis of steviol glycosides in leaves. Converts the di-glycoside steviolbioside to the tri-glycoside rebaudioside B. Converts the tri-glycoside stevioside to the tetra-glycoside rebaudioside A. Converts the tetra-glycoside rebaudioside E to the penta-glycoside rebaudioside D. Converts the penta-glycoside rebaudioside D to the hexa-glycoside rebaudioside M. Can glucosylate rubusoside and rebaudioside A in vitro. In Stevia rebaudiana (Stevia), this protein is UDP-glycosyltransferase 76G1.